We begin with the raw amino-acid sequence, 510 residues long: MTDAYVGAIDQGTTGTRFIVFDQHGDVVANTYEKHEQHYPEPGWVEHDPLEIWENTKSVVTAGLSAAGLDADDLAAIGITNQRETTVVWDAASGRPIHNALVWQDRRTTSRVESLEENGKIERIREKTGLEADAYFSATKTEWLLDEAEPLKLSSARASSLRDRARDGELLMGTIDSWLIYNLTGEHITDVSNASRTMLYNITDLEWDDWLLEEFDIPREMLPEVRPSSDEAVYGHTDPDGFLGAAVPVTAALGDQQAALFGQTCFDAGDAKNTYGTGSFYLMNTGEDAVSSEHGLLTTIGFQLSGEPVQYALEGSIFVTGAAIEWLEDVDLINNAAQTAELASSVDTTDGVYMVPAFTGLGAPHWDGRARGTLVGMTRGTRKAHIVRATLESIAYQTRDIAAAMEADSGVSTTTLRVDGGAVKNNFLCQLQSDIIQTDLARPEVDETTALGAAYAAGLAVGYWDSLDDLRENWRVDRSFEPEMDPSEADSKYGRWEDAVDRSLAWATED.

An ADP-binding site is contributed by threonine 13. Residues threonine 13 and threonine 14 each contribute to the ATP site. Threonine 13 contributes to the sn-glycerol 3-phosphate binding site. Arginine 17 is a binding site for ADP. The sn-glycerol 3-phosphate site is built by arginine 83, glutamate 84, tyrosine 135, and aspartate 255. 5 residues coordinate glycerol: arginine 83, glutamate 84, tyrosine 135, aspartate 255, and glutamine 256. The ADP site is built by threonine 277, glycine 321, glycine 421, and asparagine 425. Residues threonine 277, glycine 321, and glycine 421 each coordinate ATP.

Belongs to the FGGY kinase family.

It carries out the reaction glycerol + ATP = sn-glycerol 3-phosphate + ADP + H(+). The protein operates within polyol metabolism; glycerol degradation via glycerol kinase pathway; sn-glycerol 3-phosphate from glycerol: step 1/1. In terms of biological role, key enzyme in the regulation of glycerol uptake and metabolism. Catalyzes the phosphorylation of glycerol to yield sn-glycerol 3-phosphate. The polypeptide is Glycerol kinase (Halobacterium salinarum (strain ATCC 29341 / DSM 671 / R1)).